A 250-amino-acid polypeptide reads, in one-letter code: Archaeal flagellar motor scaffold protein FlaX (250 aa).

Residues 1–9 are Extracellular-facing; that stretch reads MAIQDLLQS. A helical membrane pass occupies residues 10–30; it reads SLFIILIGVGIPIAAFLEILF. Residues 31-250 are Cytoplasmic-facing; it reads RVILPKTKRV…MILEGGGVNG (220 aa). The span at 42-61 shows a compositional bias: polar residues; the sequence is TQQSPQNISQEQRFPTQQKP. The interval 42–72 is disordered; that stretch reads TQQSPQNISQEQRFPTQQKPANDETSKYSSD. Residues 62–72 show a composition bias toward basic and acidic residues; the sequence is ANDETSKYSSD.

The S.acidocaldarius archaellum assembly machinery and its filament consist of seven proteins (FlaB, FlaF, FlaG, FlaH, FlaI, FlaJ and FlaX). FlaX assembles into ring-shaped oligomers. Interacts directly with FlaH and the motor ATPase FlaI.

It localises to the archaeal flagellum. The protein resides in the cell membrane. The presence of the flagellar core components FlaH, FlaI and FlaJ seems to be crucial for the stability of FlaX. In terms of biological role, component of the archaellum. FlaX, FlaH and FlaI form the core cytoplasmic motor complex of the crenarchaeal archaellum. FlaX forms a ring that may act as a membrane-bound cytoplasmic scaffold that guides the assembly of the archaellum motor complex. Is essential for archaellum assembly. In Sulfolobus acidocaldarius (strain ATCC 33909 / DSM 639 / JCM 8929 / NBRC 15157 / NCIMB 11770), this protein is Archaeal flagellar motor scaffold protein FlaX.